Consider the following 715-residue polypeptide: Palmitoyltransferase ZDHHC5 (715 aa).

Over 1-13 (MPAESGKRFKPSK) the chain is Cytoplasmic. The chain crosses the membrane as a helical span at residues 14-34 (YVPVSAAAIFLVGATTLFFAF). The Extracellular segment spans residues 35 to 52 (TCPGLSLNVSPAVPIYNA). Residues 53 to 73 (IMFLFVLANFSMATFMDPGIF) form a helical membrane-spanning segment. Residues 74 to 148 (PRAEEDEDKE…NCIGRRNYRY (75 aa)) are Cytoplasmic-facing. Tyrosine 91 bears the Phosphotyrosine mark. The 51-residue stretch at 104-154 (KWCATCRFYRPPRCSHCSVCDNCVEEFDHHCPWVNNCIGRRNYRYFFLFLL) folds into the DHHC domain. Catalysis depends on cysteine 134, which acts as the S-palmitoyl cysteine intermediate. Residues 149-169 (FFLFLLSLTAHIMGVFGFGLL) traverse the membrane as a helical segment. Residues 170-191 (YVLYHIEELSGVRTAVTMAVMC) are Extracellular-facing. A helical transmembrane segment spans residues 192-212 (VAGLFFIPVAGLTGFHVVLVA). The Cytoplasmic portion of the chain corresponds to 213-715 (RGRTTNEQVT…VGGTTYEISV (503 aa)). Serine 247 is subject to Phosphoserine. The tract at residues 289-715 (GELRRTKSKG…VGGTTYEISV (427 aa)) is disordered. Threonine 294 is modified (phosphothreonine). 2 positions are modified to phosphoserine: serine 296 and serine 299. The residue at position 303 (threonine 303) is a Phosphothreonine. Serine 345 bears the Phosphoserine mark. 2 positions are modified to phosphothreonine: threonine 348 and threonine 350. Residues 359-373 (SSSSTSAAMPHSSSA) are compositionally biased toward low complexity. Residues serine 380, serine 398, serine 406, and serine 409 each carry the phosphoserine modification. Threonine 411 carries the post-translational modification Phosphothreonine. Residues serine 415, serine 425, serine 429, and serine 432 each carry the phosphoserine modification. Positions 422–432 (SSGSRSSSLKS) are enriched in low complexity. Phosphothreonine is present on threonine 436. The span at 442-478 (QLQSIRSEGTTSTSYKSLANQTRNGSLSYDSLLTPSD) shows a compositional bias: polar residues. A phosphoserine mark is found at serine 529 and serine 554. The span at 581–597 (PRTSSSSDDSKRSPLSK) shows a compositional bias: low complexity. Arginine 617 bears the Omega-N-methylarginine mark. Serine 621 bears the Phosphoserine mark. Threonine 659 carries the phosphothreonine modification. A compositionally biased stretch (polar residues) spans 666–677 (LKTTYSKSNGQP). Residues serine 684 and serine 694 each carry the phosphoserine modification. An Omega-N-methylarginine modification is found at arginine 697.

It belongs to the DHHC palmitoyltransferase family. ERF2/ZDHHC9 subfamily. In terms of processing, phosphorylation regulates association with endocytic proteins and its subcellular localization. Phosphorylation by LYN during fatty acid uptake leads to inactivation of the activity. Post-translationally, autopalmitoylated. Palmitoylation of the C-terminal tail regulates stimulation-dependent plasma membrane motility. In terms of tissue distribution, highly enriched in brain, detectable in liver and heart, and undetectable in most other tissues.

Its subcellular location is the cell membrane. It carries out the reaction L-cysteinyl-[protein] + hexadecanoyl-CoA = S-hexadecanoyl-L-cysteinyl-[protein] + CoA. Palmitoyltransferase that catalyzes the addition of palmitate onto various protein substrates such as CTNND2, CD36, GSDMD, NLRP3, NOD1, NOD2, STAT3 and S1PR1 thus plays a role in various biological processes including cell adhesion, inflammation, fatty acid uptake, bacterial sensing or cardiac functions. Plays an important role in the regulation of synapse efficacy by mediating palmitoylation of delta-catenin/CTNND2, thereby increasing synaptic delivery and surface stabilization of alpha-amino-3-hydroxy-5-methyl-4-isoxazole propionic acid receptors (AMPARs). Under basal conditions, remains at the synaptic membrane through FYN-mediated phosphorylation that prevents association with endocytic proteins. Neuronal activity enhances the internalization and trafficking of DHHC5 from spines to dendritic shafts where it palmitoylates delta-catenin/CTNND2. Regulates cell adhesion at the plasma membrane by palmitoylating GOLGA7B and DSG2. Plays a role in innate immune response by mediating the palmitoylation of NOD1 and NOD2 and their proper recruitment to the bacterial entry site and phagosomes. Also participates in fatty acid uptake by palmitoylating CD36 and thereby targeting it to the plasma membrane. Upon binding of fatty acids to CD36, gets phosphorylated by LYN leading to inactivation and subsequent CD36 caveolar endocytosis. Controls oligodendrocyte development by catalyzing STAT3 palmitoylation. Acts as a regulator of inflammatory response by mediating palmitoylation of NLRP3 and GSDMD. Palmitoylates NLRP3 to promote inflammasome assembly and activation. Activates pyroptosis by catalyzing palmitoylation of gasdermin-D (GSDMD), thereby promoting membrane translocation and pore formation of GSDMD. In Mus musculus (Mouse), this protein is Palmitoyltransferase ZDHHC5 (Zdhhc5).